The primary structure comprises 763 residues: Phosphoglycerol transferase I (763 aa).

Transmembrane regions (helical) follow at residues 1–21 (MSEL…AWKA), 26–46 (WWFA…ITLF), 77–97 (ILPG…LGWI), and 108–128 (FGYS…SPAF).

Belongs to the OpgB family.

It is found in the cell inner membrane. It catalyses the reaction a phosphatidylglycerol + a membrane-derived-oligosaccharide D-glucose = a 1,2-diacyl-sn-glycerol + a membrane-derived-oligosaccharide 6-(glycerophospho)-D-glucose.. Its pathway is glycan metabolism; osmoregulated periplasmic glucan (OPG) biosynthesis. Functionally, transfers a phosphoglycerol residue from phosphatidylglycerol to the membrane-bound nascent glucan backbones. The sequence is that of Phosphoglycerol transferase I from Escherichia coli O127:H6 (strain E2348/69 / EPEC).